We begin with the raw amino-acid sequence, 913 residues long: Proline and serine-rich protein 1 (913 aa).

The residue at position 1 (methionine 1) is an N-acetylmethionine. 4 disordered regions span residues valine 233–serine 291, alanine 488–lysine 507, serine 592–leucine 618, and aspartate 888–glutamine 913. Residues leucine 251–glycine 275 are compositionally biased toward polar residues. Over residues serine 276–serine 291 the composition is skewed to low complexity. Polar residues predominate over residues alanine 488–asparagine 506. Residues tyrosine 893–glutamine 913 show a composition bias toward polar residues.

Interacts with TET2 and OGT; this interaction mediates TET2 O-GlcNAcylation and stability by promoting the interaction between OGT and TET2. Interacts with KDM6A. Interacts with TET1. In terms of processing, glycosylated. Interaction with OGT leads to GlcNAcylation.

Functionally, mediates OGT interaction with and O-GlcNAcylation of TET2 to control TET2 stabilization at enhancers and CpG islands (CGIs). In Mus musculus (Mouse), this protein is Proline and serine-rich protein 1.